Consider the following 165-residue polypeptide: Lipoprotein signal peptidase (165 aa).

The next 2 membrane-spanning stretches (helical) occupy residues 66–86 (WQFWLFLVATVLAVWAILSLT) and 91–111 (NEPVLYTAFGLIMGGALGNLV). Residues Asp121 and Asp139 contribute to the active site. Residues 132-152 (WPAFNVADIAICIGAFLAFVA) traverse the membrane as a helical segment.

It belongs to the peptidase A8 family.

It is found in the cell inner membrane. It carries out the reaction Release of signal peptides from bacterial membrane prolipoproteins. Hydrolyzes -Xaa-Yaa-Zaa-|-(S,diacylglyceryl)Cys-, in which Xaa is hydrophobic (preferably Leu), and Yaa (Ala or Ser) and Zaa (Gly or Ala) have small, neutral side chains.. The protein operates within protein modification; lipoprotein biosynthesis (signal peptide cleavage). Functionally, this protein specifically catalyzes the removal of signal peptides from prolipoproteins. The sequence is that of Lipoprotein signal peptidase from Nitratidesulfovibrio vulgaris (strain DP4) (Desulfovibrio vulgaris).